A 982-amino-acid chain; its full sequence is E3 ubiquitin-protein ligase CBL-B (982 aa).

The span at 1–14 (MASSSSSSSSTNSS) shows a compositional bias: low complexity. Residues 1 to 25 (MASSSSSSSSTNSSAVTGRLPGARS) are disordered. The 4H stretch occupies residues 46–178 (PPKQAAADRR…KAIFPSGQFQ (133 aa)). In terms of domain architecture, Cbl-PTB spans 46 to 354 (PPKQAAADRR…GRSYNPDLTD (309 aa)). The EF-hand-like stretch occupies residues 179-251 (GDNFRITKAD…FEFDIFTRLF (73 aa)). Residues D232, T234, N236, Y238, and E243 each contribute to the Ca(2+) site. Positions 252 to 354 (QPWTSILRNW…GRSYNPDLTD (103 aa)) are SH2-like. A 4-O-phospho-L-tyrosine-binding site is contributed by R297. Residues 355–383 (LCEPTPHDHIKVTQEQYELYCEMGSTFQL) are linker. An RING-type zinc finger spans residues 384-423 (CKICAENDKDVKIEPCGHLMCTSCLTSWQESDGQGCPFCR). 3 disordered regions span residues 480-582 (MNER…RTCR), 709-728 (VRNSAEEDDSEYKIPSSHPV), and 766-911 (LKQP…PVPR). The span at 483-497 (RQNSPVTSPGSSPLS) shows a compositional bias: polar residues. Positions 554–576 (LPAPPPPLREPPPPPERPPPIPP) are enriched in pro residues. Pro residues predominate over residues 825-834 (PSQPPPPPPA). The 44-residue stretch at 927-970 (SLAENVDAKIAKLMGEGFPFEEVKRALEIAQNNVDVARSILREF) folds into the UBA domain.

Interacts with several SH3 domain-containing proteins and with poly-ubiquitinated proteins.

It localises to the cytoplasm. The catalysed reaction is S-ubiquitinyl-[E2 ubiquitin-conjugating enzyme]-L-cysteine + [acceptor protein]-L-lysine = [E2 ubiquitin-conjugating enzyme]-L-cysteine + N(6)-ubiquitinyl-[acceptor protein]-L-lysine.. Its pathway is protein modification; protein ubiquitination. E3 ubiquitin-protein ligase which accepts ubiquitin from specific E2 ubiquitin-conjugating enzymes, and transfers it to substrates, generally promoting their degradation by the proteasome. This chain is E3 ubiquitin-protein ligase CBL-B (cblb), found in Xenopus tropicalis (Western clawed frog).